A 127-amino-acid polypeptide reads, in one-letter code: Fluoride-specific ion channel FluC (127 aa).

Helical transmembrane passes span 4–24 (SILAIALGAALGALLRWFLGL), 36–56 (GTLLANLVGGYAIGAAIAYFA), 68–88 (LIITGFCGGLTTFSTFSAEVV), and 99–119 (AAGAIATHVGGSLLMTLLGLF). Residues Gly75 and Thr78 each contribute to the Na(+) site.

The protein belongs to the fluoride channel Fluc/FEX (TC 1.A.43) family.

The protein resides in the cell inner membrane. It catalyses the reaction fluoride(in) = fluoride(out). With respect to regulation, na(+) is not transported, but it plays an essential structural role and its presence is essential for fluoride channel function. Its function is as follows. Fluoride-specific ion channel. Important for reducing fluoride concentration in the cell, thus reducing its toxicity. The chain is Fluoride-specific ion channel FluC from Pseudomonas paraeruginosa (strain DSM 24068 / PA7) (Pseudomonas aeruginosa (strain PA7)).